Here is a 93-residue protein sequence, read N- to C-terminus: YcgL domain-containing protein VFMJ11_1829 (93 aa).

The 84-residue stretch at 1 to 84 folds into the YcgL domain; sequence MFCSIYKSTK…PPENLLEKYK (84 aa).

The protein is YcgL domain-containing protein VFMJ11_1829 of Aliivibrio fischeri (strain MJ11) (Vibrio fischeri).